A 631-amino-acid chain; its full sequence is Pro-interleukin-16 (631 aa).

Disordered regions lie at residues 30-269 (ENPG…FPLT) and 317-344 (PKEG…ASDT). Over residues 132 to 144 (SSSSSSIKQRISS) the composition is skewed to low complexity. A Phosphoserine modification is found at S221. Over residues 322-344 (SPTSSSNEDSAANGSAETSASDT) the composition is skewed to polar residues. The tract at residues 405-501 (KQLDSIHVTI…IVTRKLTAES (97 aa)) is interaction with PPP1R12A, PPP1R12B and PPP1R12C. 2 PDZ domains span residues 411 to 496 (HVTI…VTRK) and 533 to 618 (TVTL…IRRK).

In terms of assembly, homotetramer. Pro-interleukin-16 interacts (via PDZ 2 domain) with PPP1R12A, PPP1R12B and PPP1R12C. Pro-interleukin-16 interacts with GRIN2A. Pro-interleukin-16 interacts with GABPB1. Pro-interleukin-16 interacts (via PDZ 3 domain) with HDAC3.

The protein localises to the secreted. The protein resides in the cytoplasm. It is found in the nucleus. Functionally, interleukin-16 stimulates a migratory response in CD4+ lymphocytes, monocytes, and eosinophils. Primes CD4+ T-cells for IL-2 and IL-15 responsiveness. Also induces T-lymphocyte expression of interleukin 2 receptor. Ligand for CD4. In terms of biological role, pro-interleukin-16 is involved in cell cycle progression in T-cells. Appears to be involved in transcriptional regulation of SKP2 and is probably part of a transcriptional repression complex on the core promoter of the SKP2 gene. May act as a scaffold for GABPB1 (the DNA-binding subunit the GABP transcription factor complex) and HDAC3 thus maintaining transcriptional repression and blocking cell cycle progression in resting T-cells. The sequence is that of Pro-interleukin-16 (IL16) from Chlorocebus aethiops (Green monkey).